The sequence spans 407 residues: 1-deoxy-D-xylulose 5-phosphate reductoisomerase (407 aa).

NADPH-binding residues include Thr-25, Gly-26, Ser-27, Ile-28, Asn-53, and Asn-136. Lys-137 contacts 1-deoxy-D-xylulose 5-phosphate. Glu-138 provides a ligand contact to NADPH. Asp-162 serves as a coordination point for Mn(2+). 1-deoxy-D-xylulose 5-phosphate-binding residues include Ser-163, Glu-164, Ser-188, and His-211. Glu-164 serves as a coordination point for Mn(2+). Gly-217 contacts NADPH. 1-deoxy-D-xylulose 5-phosphate contacts are provided by Ser-224, Asn-229, Lys-230, and Glu-233. Glu-233 is a binding site for Mn(2+).

The protein belongs to the DXR family. Requires Mg(2+) as cofactor. It depends on Mn(2+) as a cofactor.

It catalyses the reaction 2-C-methyl-D-erythritol 4-phosphate + NADP(+) = 1-deoxy-D-xylulose 5-phosphate + NADPH + H(+). It functions in the pathway isoprenoid biosynthesis; isopentenyl diphosphate biosynthesis via DXP pathway; isopentenyl diphosphate from 1-deoxy-D-xylulose 5-phosphate: step 1/6. Functionally, catalyzes the NADPH-dependent rearrangement and reduction of 1-deoxy-D-xylulose-5-phosphate (DXP) to 2-C-methyl-D-erythritol 4-phosphate (MEP). This Rhodopseudomonas palustris (strain HaA2) protein is 1-deoxy-D-xylulose 5-phosphate reductoisomerase.